An 81-amino-acid chain; its full sequence is Elongation factor 1-beta (81 aa).

It belongs to the EF-1-beta/EF-1-delta family.

In terms of biological role, promotes the exchange of GDP for GTP in EF-1-alpha/GDP, thus allowing the regeneration of EF-1-alpha/GTP that could then be used to form the ternary complex EF-1-alpha/GTP/AAtRNA. This Nanoarchaeum equitans (strain Kin4-M) protein is Elongation factor 1-beta.